A 324-amino-acid chain; its full sequence is dITP/XTP pyrophosphatase (324 aa).

The tract at residues 1–126 (MTKSIFEYKD…SDNKSDFGDV (126 aa)) is unknown. The interval 127–324 (LLIATRNEGK…EVFPAWQNKQ (198 aa)) is NTP pyrophosphatase. 131 to 136 (TRNEGK) contacts substrate. Residue D193 is the Proton acceptor of the active site. D193 provides a ligand contact to Mg(2+). Residues S194, 277-280 (FGYD), K300, and 305-306 (HR) each bind substrate.

The protein belongs to the HAM1 NTPase family. As to quaternary structure, homodimer. Mg(2+) serves as cofactor.

The enzyme catalyses XTP + H2O = XMP + diphosphate + H(+). It catalyses the reaction dITP + H2O = dIMP + diphosphate + H(+). It carries out the reaction ITP + H2O = IMP + diphosphate + H(+). In terms of biological role, pyrophosphatase that catalyzes the hydrolysis of nucleoside triphosphates to their monophosphate derivatives, with a high preference for the non-canonical purine nucleotides XTP (xanthosine triphosphate), dITP (deoxyinosine triphosphate) and ITP. Seems to function as a house-cleaning enzyme that removes non-canonical purine nucleotides from the nucleotide pool, thus preventing their incorporation into DNA/RNA and avoiding chromosomal lesions. This chain is dITP/XTP pyrophosphatase, found in Streptococcus thermophilus (strain CNRZ 1066).